A 126-amino-acid polypeptide reads, in one-letter code: MSDLRRKGWWNVPDYFYSPLVFDMEEDQEDYIFGPDDEYLHTLEVHSNTLIQLERWFSPTGQTRVTVVGPLKARLWVMDMIRKVGSKNTLDKIKGKLMLLHIRSHPLTDQDLQIHLISGSSCWFPD.

One can recognise a KH domain in the interval 19-78; it reads PLVFDMEEDQEDYIFGPDDEYLHTLEVHSNTLIQLERWFSPTGQTRVTVVGPLKARLWVM.

The protein belongs to the KHDC1 family.

This Mus musculus (Mouse) protein is KH homology domain-containing protein 1B (Khdc1b).